Reading from the N-terminus, the 317-residue chain is Melanocyte-stimulating hormone receptor (317 aa).

The Extracellular segment spans residues 1–37 (MPMQGAQKRLLGSLNSTPTATPNLGLAANHTGAPCLE). Asparagine 29 carries an N-linked (GlcNAc...) asparagine glycan. Residues 38–63 (VSIPDGLFLSLGLVSLVENVLVVAAI) form a helical membrane-spanning segment. Residues 64-72 (AKNRNLHSP) lie on the Cytoplasmic side of the membrane. A helical transmembrane segment spans residues 73-93 (MYCFICCLALSDLLVSSSNML). Residues 94–118 (ETAVILLLEAGALATRASVVQQLQN) are Extracellular-facing. Residues 119–140 (TIDVLTCSSMLCSLCFLGAIAV) form a helical membrane-spanning segment. Over 141–163 (DRHVSIFYALRYHSIMTLARARR) the chain is Cytoplasmic. Residues 164-183 (AIAAIWVASVLSSTLFIAYC) form a helical membrane-spanning segment. Over 184 to 191 (DHAXVLLC) the chain is Extracellular. A helical membrane pass occupies residues 192 to 211 (LVVFFLAMLVLMAVLYVHML). Topologically, residues 212–240 (ARACQHAQGITRLHQRQPPAHQGFGFRGA) are cytoplasmic. A helical transmembrane segment spans residues 241 to 266 (ATLTILLGIFFLCWGPFFLHLTLVVL). The Extracellular segment spans residues 267–279 (CPQHLTCSCIFKN). A helical transmembrane segment spans residues 280-300 (FKVFLTLIICSTIIDPLIYAF). The Cytoplasmic portion of the chain corresponds to 301–317 (RSQELRRTLKELLLCSW). The S-palmitoyl cysteine moiety is linked to residue cysteine 315.

The protein belongs to the G-protein coupled receptor 1 family. In terms of assembly, interacts with MGRN1, but does not undergo MGRN1-mediated ubiquitination; this interaction competes with GNAS-binding and thus inhibits agonist-induced cAMP production. Interacts with OPN3; the interaction results in a decrease in MC1R-mediated cAMP signaling and ultimately a decrease in melanin production in melanocytes.

Its subcellular location is the cell membrane. Receptor for MSH (alpha, beta and gamma) and ACTH. The activity of this receptor is mediated by G proteins which activate adenylate cyclase. Mediates melanogenesis, the production of eumelanin (black/brown) and phaeomelanin (red/yellow), via regulation of cAMP signaling in melanocytes. This chain is Melanocyte-stimulating hormone receptor (MC1R), found in Ateles paniscus (Black spider monkey).